We begin with the raw amino-acid sequence, 306 residues long: Curved DNA-binding protein (306 aa).

One can recognise a J domain in the interval 5 to 69; sequence DYYAIMGVKP…QRRAEYDQMW (65 aa).

The protein localises to the cytoplasm. It localises to the nucleoid. Its function is as follows. DNA-binding protein that preferentially recognizes a curved DNA sequence. It is probably a functional analog of DnaJ; displays overlapping activities with DnaJ, but functions under different conditions, probably acting as a molecular chaperone in an adaptive response to environmental stresses other than heat shock. Lacks autonomous chaperone activity; binds native substrates and targets them for recognition by DnaK. Its activity is inhibited by the binding of CbpM. The polypeptide is Curved DNA-binding protein (Escherichia coli (strain 55989 / EAEC)).